A 1079-amino-acid chain; its full sequence is Carbamoyl phosphate synthase large chain (1079 aa).

The carboxyphosphate synthetic domain stretch occupies residues 2-403 (PKSTDIKSIL…SIQKAIRGLE (402 aa)). 12 residues coordinate ATP: arginine 129, arginine 169, glycine 175, glycine 176, glutamate 208, leucine 210, glutamate 215, glycine 241, isoleucine 242, histidine 243, glutamine 285, and glutamate 299. One can recognise an ATP-grasp 1 domain in the interval 133 to 328 (EHSMKKLNLE…IAKIAAKLAI (196 aa)). Mg(2+) contacts are provided by glutamine 285, glutamate 299, and asparagine 301. Residues glutamine 285, glutamate 299, and asparagine 301 each contribute to the Mn(2+) site. An oligomerization domain region spans residues 404–553 (VGASGFDSKI…YSTWEDECES (150 aa)). A carbamoyl phosphate synthetic domain region spans residues 554-936 (HPSKNNKKII…AFSKSMLGAH (383 aa)). In terms of domain architecture, ATP-grasp 2 spans 679 to 870 (QKTVNKLRLQ…LAKISVRVMC (192 aa)). ATP is bound by residues arginine 715, glutamine 754, leucine 756, glutamate 761, glycine 786, valine 787, histidine 788, serine 789, glutamine 829, and glutamate 841. Glutamine 829, glutamate 841, and asparagine 843 together coordinate Mg(2+). 3 residues coordinate Mn(2+): glutamine 829, glutamate 841, and asparagine 843. Residues 937 to 1079 (TNMKKSGRVL…KKIQLFYTKK (143 aa)) form the MGS-like domain. The allosteric domain stretch occupies residues 937–1079 (TNMKKSGRVL…KKIQLFYTKK (143 aa)).

It belongs to the CarB family. As to quaternary structure, composed of two chains; the small (or glutamine) chain promotes the hydrolysis of glutamine to ammonia, which is used by the large (or ammonia) chain to synthesize carbamoyl phosphate. Tetramer of heterodimers (alpha,beta)4. Requires Mg(2+) as cofactor. The cofactor is Mn(2+).

It carries out the reaction hydrogencarbonate + L-glutamine + 2 ATP + H2O = carbamoyl phosphate + L-glutamate + 2 ADP + phosphate + 2 H(+). It catalyses the reaction hydrogencarbonate + NH4(+) + 2 ATP = carbamoyl phosphate + 2 ADP + phosphate + 2 H(+). It functions in the pathway amino-acid biosynthesis; L-arginine biosynthesis; carbamoyl phosphate from bicarbonate: step 1/1. The protein operates within pyrimidine metabolism; UMP biosynthesis via de novo pathway; (S)-dihydroorotate from bicarbonate: step 1/3. Its function is as follows. Large subunit of the glutamine-dependent carbamoyl phosphate synthetase (CPSase). CPSase catalyzes the formation of carbamoyl phosphate from the ammonia moiety of glutamine, carbonate, and phosphate donated by ATP, constituting the first step of 2 biosynthetic pathways, one leading to arginine and/or urea and the other to pyrimidine nucleotides. The large subunit (synthetase) binds the substrates ammonia (free or transferred from glutamine from the small subunit), hydrogencarbonate and ATP and carries out an ATP-coupled ligase reaction, activating hydrogencarbonate by forming carboxy phosphate which reacts with ammonia to form carbamoyl phosphate. The protein is Carbamoyl phosphate synthase large chain of Buchnera aphidicola subsp. Acyrthosiphon pisum (strain APS) (Acyrthosiphon pisum symbiotic bacterium).